Here is a 341-residue protein sequence, read N- to C-terminus: GTP-binding protein REM 2 (341 aa).

The span at 1–13 (MHTDLDTDMDMDT) shows a compositional bias: acidic residues. Disordered stretches follow at residues 1-71 (MHTD…GSMP) and 84-106 (VDEL…GSGE). The span at 18-30 (LCSSSSRQASPLG) shows a compositional bias: polar residues. Serine 27 is subject to Phosphoserine. A compositionally biased stretch (low complexity) spans 90–106 (PPQASPSGSSDSLGSGE). Residues 122-129 (GESGVGKS), 230-233 (NKSD), and 261-262 (AA) each bind GTP. The interval 282–309 (RGRGHAGGQRPEPSSPDGPAPPTRRESL) is disordered. Residues 294 to 303 (PSSPDGPAPP) are compositionally biased toward pro residues. The residue at position 296 (serine 296) is a Phosphoserine.

The protein belongs to the small GTPase superfamily. RGK family.

The protein localises to the cell membrane. In terms of biological role, binds GTP saturably and exhibits a low intrinsic rate of GTP hydrolysis. This chain is GTP-binding protein REM 2 (Rem2), found in Mus musculus (Mouse).